We begin with the raw amino-acid sequence, 302 residues long: HTH-type transcriptional regulator AlsR (302 aa).

Positions Met1–Thr58 constitute an HTH lysR-type domain. The segment at residues Phe18–Lys37 is a DNA-binding region (H-T-H motif).

The protein belongs to the LysR transcriptional regulatory family.

Regulates the expression of the alsSD operon for acetoin biosynthesis. This is HTH-type transcriptional regulator AlsR (alsR) from Bacillus subtilis (strain 168).